A 537-amino-acid polypeptide reads, in one-letter code: GTPase LSG1-1 (537 aa).

One can recognise a CP-type G domain in the interval tryptophan 158 to proline 362. A DARXP motif motif is present at residues aspartate 176–proline 180. Residues asparagine 206–aspartate 209 form a G4 region. Position 206–209 (asparagine 206–aspartate 209) interacts with GTP. The tract at residues serine 234 to lysine 236 is G5. Residues glycine 311–serine 318 are G1. Asparagine 314–serine 319 provides a ligand contact to GTP. Residues glycine 337 to histidine 341 are G2. Residues aspartate 355–glycine 358 form a G3 region. Residue glycine 358 participates in GTP binding. The interval leucine 484–glutamine 508 is disordered. Positions glutamate 487–glutamate 500 are enriched in basic and acidic residues.

Belongs to the TRAFAC class YlqF/YawG GTPase family. In terms of tissue distribution, ubiquitous, with the highest expression in stem and hypsophyll on day 66.

The protein localises to the cytoplasm. GTPase that might be redundant with LSG1-2 for ribosome biogenesis. Binds to 23S rRNA. The polypeptide is GTPase LSG1-1 (Arabidopsis thaliana (Mouse-ear cress)).